A 150-amino-acid polypeptide reads, in one-letter code: Arginine repressor (150 aa).

This sequence belongs to the ArgR family.

The protein resides in the cytoplasm. The protein operates within amino-acid biosynthesis; L-arginine biosynthesis [regulation]. In terms of biological role, regulates arginine biosynthesis genes. This chain is Arginine repressor, found in Halothermothrix orenii (strain H 168 / OCM 544 / DSM 9562).